A 312-amino-acid chain; its full sequence is Ribonuclease HIII (312 aa).

The 217-residue stretch at F95 to P311 folds into the RNase H type-2 domain. A divalent metal cation-binding residues include D101, E102, and D206.

This sequence belongs to the RNase HII family. RnhC subfamily. Mn(2+) is required as a cofactor. The cofactor is Mg(2+).

It localises to the cytoplasm. The catalysed reaction is Endonucleolytic cleavage to 5'-phosphomonoester.. Functionally, endonuclease that specifically degrades the RNA of RNA-DNA hybrids. The chain is Ribonuclease HIII from Staphylococcus aureus (strain Mu3 / ATCC 700698).